We begin with the raw amino-acid sequence, 507 residues long: Desmethyl-deoxy-podophyllotoxin synthase (507 aa).

Residues 1–21 form a helical membrane-spanning segment; sequence MEFLSFPLSSALLIILLFMLV. C440 is a heme binding site.

Belongs to the cytochrome P450 family. Heme is required as a cofactor. Rhizome-specific expression.

The protein resides in the membrane. The enzyme catalyses (-)-deoxypodophyllotoxin + reduced [NADPH--hemoprotein reductase] + O2 = (-)-4'-desmethyl-deoxypodophyllotoxin + formaldehyde + oxidized [NADPH--hemoprotein reductase] + H2O + H(+). It functions in the pathway aromatic compound metabolism; phenylpropanoid biosynthesis. Functionally, cytochrome P450 involved in the biosynthesis of etoposide, a chemotherapeutic compound of the topoisomerase inhibitor family. Catalyzes the conversion of deoxypodophyllotoxin to desmethyl-deoxypodophyllotoxin. The chain is Desmethyl-deoxy-podophyllotoxin synthase from Sinopodophyllum hexandrum (Himalayan may apple).